Here is a 2178-residue protein sequence, read N- to C-terminus: DNA-directed RNA polymerase subunit beta (2178 aa).

3 insert regions span residues 269–325 (SKKI…TPFV), 714–1508 (KRID…LFYN), and 1703–1900 (KGND…LQPM).

Belongs to the RNA polymerase beta chain family. As to quaternary structure, in plastids the minimal PEP RNA polymerase catalytic core is composed of four subunits: alpha, beta, beta', and beta''. When a (nuclear-encoded) sigma factor is associated with the core the holoenzyme is formed, which can initiate transcription.

The protein localises to the plastid. It localises to the chloroplast. The enzyme catalyses RNA(n) + a ribonucleoside 5'-triphosphate = RNA(n+1) + diphosphate. Its function is as follows. DNA-dependent RNA polymerase catalyzes the transcription of DNA into RNA using the four ribonucleoside triphosphates as substrates. This chain is DNA-directed RNA polymerase subunit beta, found in Tupiella akineta (Green alga).